Here is a 388-residue protein sequence, read N- to C-terminus: (S)-8-oxocitronellyl enol synthase ISY1 (388 aa).

Residues 35-37, 63-64, 81-82, 105-106, and Gln143 each bind NADP(+); these read TGI, RR, DV, and TW. Catalysis depends on residues Lys147 and Tyr178. Residues Tyr178, Ile205, and 212–214 contribute to the NADP(+) site; that span reads SMM.

Belongs to the short-chain dehydrogenases/reductases (SDR) family.

It carries out the reaction (S)-8-oxocitronellyl enol + NADP(+) = (6E)-8-oxogeranial + NADPH + H(+). It catalyses the reaction (S)-8-oxocitronellyl enol + NAD(+) = (6E)-8-oxogeranial + NADH + H(+). Iridoid synthase that catalyzes the first step in generation of the iridoid ring scaffold using the linear monoterpene (6E)-8-oxogeranial as substrate. Iridoids comprise a large family of distinctive bicyclic monoterpenes that possess a wide range of pharmacological activities, including anticancer, anti-inflammatory, antifungal and antibacterial activities. Catalyzes the conversion of the linear monoterpene (6E)-8-oxogeranial to (S)-8-oxocitronellyl enol, a precursor of nepetalactones, which are metabolites that are both insect-repellent and have euphoric effect in cats. This is (S)-8-oxocitronellyl enol synthase ISY1 from Nepeta cataria (Catnip).